Reading from the N-terminus, the 204-residue chain is Holliday junction branch migration complex subunit RuvA (204 aa).

The domain I stretch occupies residues 1–67; that stretch reads MIAFLSGHLV…ETELVLYGFG (67 aa). The tract at residues 68 to 146 is domain II; sequence SPAERDVFVE…HWRQGLENAD (79 aa). The flexible linker stretch occupies residues 147-156; the sequence is RPLAGGPPPA. The domain III stretch occupies residues 156–204; that stretch reads AIREEVEMALLALGYSLQEIQAALQALPSQPRPTEEWLRDAITYLSRQP.

This sequence belongs to the RuvA family. As to quaternary structure, homotetramer. Forms an RuvA(8)-RuvB(12)-Holliday junction (HJ) complex. HJ DNA is sandwiched between 2 RuvA tetramers; dsDNA enters through RuvA and exits via RuvB. An RuvB hexamer assembles on each DNA strand where it exits the tetramer. Each RuvB hexamer is contacted by two RuvA subunits (via domain III) on 2 adjacent RuvB subunits; this complex drives branch migration. In the full resolvosome a probable DNA-RuvA(4)-RuvB(12)-RuvC(2) complex forms which resolves the HJ.

It is found in the cytoplasm. Functionally, the RuvA-RuvB-RuvC complex processes Holliday junction (HJ) DNA during genetic recombination and DNA repair, while the RuvA-RuvB complex plays an important role in the rescue of blocked DNA replication forks via replication fork reversal (RFR). RuvA specifically binds to HJ cruciform DNA, conferring on it an open structure. The RuvB hexamer acts as an ATP-dependent pump, pulling dsDNA into and through the RuvAB complex. HJ branch migration allows RuvC to scan DNA until it finds its consensus sequence, where it cleaves and resolves the cruciform DNA. In Synechococcus sp. (strain JA-3-3Ab) (Cyanobacteria bacterium Yellowstone A-Prime), this protein is Holliday junction branch migration complex subunit RuvA.